We begin with the raw amino-acid sequence, 233 residues long: Orotidine 5'-phosphate decarboxylase (233 aa).

Substrate is bound by residues Asp-11, Lys-34, 61 to 70 (DLKLHDIPNT), Thr-117, Arg-179, Gln-189, Gly-209, and Arg-210. Lys-63 functions as the Proton donor in the catalytic mechanism.

Belongs to the OMP decarboxylase family. Type 1 subfamily. As to quaternary structure, homodimer.

It catalyses the reaction orotidine 5'-phosphate + H(+) = UMP + CO2. It participates in pyrimidine metabolism; UMP biosynthesis via de novo pathway; UMP from orotate: step 2/2. Catalyzes the decarboxylation of orotidine 5'-monophosphate (OMP) to uridine 5'-monophosphate (UMP). The sequence is that of Orotidine 5'-phosphate decarboxylase from Streptococcus agalactiae serotype III (strain NEM316).